The primary structure comprises 424 residues: UDP-N-acetylglucosamine 1-carboxyvinyltransferase (424 aa).

Residue 22 to 23 (KN) participates in phosphoenolpyruvate binding. Residue Arg93 coordinates UDP-N-acetyl-alpha-D-glucosamine. Residue Cys117 is the Proton donor of the active site. Cys117 is subject to 2-(S-cysteinyl)pyruvic acid O-phosphothioketal. UDP-N-acetyl-alpha-D-glucosamine contacts are provided by residues 122–126 (RPVDL), 162–165 (KVSV), Asp307, and Ile329.

The protein belongs to the EPSP synthase family. MurA subfamily.

Its subcellular location is the cytoplasm. The enzyme catalyses phosphoenolpyruvate + UDP-N-acetyl-alpha-D-glucosamine = UDP-N-acetyl-3-O-(1-carboxyvinyl)-alpha-D-glucosamine + phosphate. Its pathway is cell wall biogenesis; peptidoglycan biosynthesis. In terms of biological role, cell wall formation. Adds enolpyruvyl to UDP-N-acetylglucosamine. The polypeptide is UDP-N-acetylglucosamine 1-carboxyvinyltransferase (Haemophilus influenzae (strain 86-028NP)).